The sequence spans 363 residues: MCTTVTVLTDTWSRREKRFEGHAKILAIGTATPANWVDQTTYPDFYFRITNSQHLLDHKEKFRRICNKSKIRKRHMILTEELLKKNPNLCTYNDASLNTRQDILVSEVPKLGKEAAMKAIKEWGRPISEITHLVFCTTSGVDMPGADFQLTKLLGLNSSVKRLMMYQQGCNAGAAMLRLAKDVAENNKGARVLVVCSEVMLSVFRGPSLQQEDNLLAQCLFGDGSAALIVGTDPRPGLETPLFELISAAQTIIPNTDSHLKLHVREMGLTFHCSKAVPTFITQNVEDCLVKAFEPYGISDWNSIFWVLHPGGNAIVDGVEETLGLAPEKLRASRDVLSGYGNLTSACVLFILDEVRKKSKKDE.

Residue cysteine 170 is part of the active site.

Belongs to the thiolase-like superfamily. Chalcone/stilbene synthases family.

It catalyses the reaction (E)-4-coumaroyl-CoA + 3 malonyl-CoA + 3 H(+) = 2',4,4',6'-tetrahydroxychalcone + 3 CO2 + 4 CoA. The protein operates within secondary metabolite biosynthesis; flavonoid biosynthesis. The primary product of this enzyme is 4,2',4',6'-tetrahydroxychalcone (also termed naringenin-chalcone or chalcone) which can under specific conditions spontaneously isomerize into naringenin. This chain is Chalcone synthase B (CHSB), found in Ipomoea cordatotriloba (Tievine).